The sequence spans 1107 residues: Enolase-phosphatase E1 (1107 aa).

Positions 19 and 21 each coordinate Mg(2+). Residues Ser-152–Ser-153 and Lys-186 each bind substrate. Asp-211 serves as a coordination point for Mg(2+). The disordered stretch occupies residues Ser-258 to Ser-1107. Positions Lys-260–Glu-289 are enriched in basic and acidic residues. A compositionally biased stretch (low complexity) spans Glu-291 to Gly-306. The span at Asp-366–Asp-376 shows a compositional bias: acidic residues. 2 stretches are compositionally biased toward basic and acidic residues: residues Val-393–Gln-427 and Gly-435–Glu-462. The span at Asp-475–Ala-485 shows a compositional bias: acidic residues. Basic and acidic residues-rich tracts occupy residues Val-486–Asn-512, Asp-534–Ser-548, Thr-572–Glu-586, Thr-593–Asn-604, Lys-610–Ala-686, and Asp-693–Asp-776. Positions Glu-794–Gln-803 are enriched in low complexity. Basic and acidic residues-rich tracts occupy residues Ala-804–Ser-838 and Lys-849–Gly-908. Over residues Val-909–Glu-919 the composition is skewed to low complexity. Positions Val-920–Ser-935 are enriched in acidic residues. Composition is skewed to basic and acidic residues over residues Asp-937 to Ser-957, Asp-1001 to Ser-1028, and Asn-1035 to Asp-1047. Residues Thr-1048 to Val-1083 show a composition bias toward low complexity.

This sequence belongs to the HAD-like hydrolase superfamily. MasA/MtnC family. As to quaternary structure, monomer. Mg(2+) is required as a cofactor.

The protein localises to the cytoplasm. It localises to the nucleus. It carries out the reaction 5-methylsulfanyl-2,3-dioxopentyl phosphate + H2O = 1,2-dihydroxy-5-(methylsulfanyl)pent-1-en-3-one + phosphate. It participates in amino-acid biosynthesis; L-methionine biosynthesis via salvage pathway; L-methionine from S-methyl-5-thio-alpha-D-ribose 1-phosphate: step 3/6. Its pathway is amino-acid biosynthesis; L-methionine biosynthesis via salvage pathway; L-methionine from S-methyl-5-thio-alpha-D-ribose 1-phosphate: step 4/6. Functionally, bifunctional enzyme that catalyzes the enolization of 2,3-diketo-5-methylthiopentyl-1-phosphate (DK-MTP-1-P) into the intermediate 2-hydroxy-3-keto-5-methylthiopentenyl-1-phosphate (HK-MTPenyl-1-P), which is then dephosphorylated to form the acireductone 1,2-dihydroxy-3-keto-5-methylthiopentene (DHK-MTPene). The polypeptide is Enolase-phosphatase E1 (Aedes aegypti (Yellowfever mosquito)).